The following is a 357-amino-acid chain: Sulfate/thiosulfate import ATP-binding protein CysA (357 aa).

The ABC transporter domain occupies 3–237 (ITIQNLNKHF…PENAFVTEFL (235 aa)). 35 to 42 (GPSGCGKT) lines the ATP pocket.

The protein belongs to the ABC transporter superfamily. Sulfate/tungstate importer (TC 3.A.1.6) family. As to quaternary structure, the complex is composed of two ATP-binding proteins (CysA), two transmembrane proteins (CysT and CysW) and a solute-binding protein (CysP).

The protein localises to the cell inner membrane. It catalyses the reaction sulfate(out) + ATP + H2O = sulfate(in) + ADP + phosphate + H(+). The enzyme catalyses thiosulfate(out) + ATP + H2O = thiosulfate(in) + ADP + phosphate + H(+). Part of the ABC transporter complex CysAWTP involved in sulfate/thiosulfate import. Responsible for energy coupling to the transport system. The polypeptide is Sulfate/thiosulfate import ATP-binding protein CysA (Neisseria meningitidis serogroup B (strain ATCC BAA-335 / MC58)).